Consider the following 526-residue polypeptide: Amino acid transporter heavy chain SLC3A2 (526 aa).

The interval 1 to 31 (MSQDTEVDMKDVELNELEPEKQPMNAADGAA) is disordered. The Cytoplasmic portion of the chain corresponds to 1–75 (MSQDTEVDMK…AGSPGWVRTR (75 aa)). Serine 2 carries the post-translational modification Phosphoserine. Threonine 5 is subject to Phosphothreonine. Basic and acidic residues predominate over residues 7-21 (VDMKDVELNELEPEK). A Glycyl lysine isopeptide (Lys-Gly) (interchain with G-Cter in ubiquitin) cross-link involves residue lysine 42. Phosphoserine is present on serine 58. Lysine 59 participates in a covalent cross-link: Glycyl lysine isopeptide (Lys-Gly) (interchain with G-Cter in SUMO2). Residues 76–99 (WALLLLFWLGWLGMLAGAVVIIVR) traverse the membrane as a helical; Signal-anchor for type II membrane protein segment. Residues 100-526 (APRCRELPVQ…GLLLQFPFVA (427 aa)) are Extracellular-facing. N-linked (GlcNAc...) asparagine glycans are attached at residues asparagine 166, asparagine 259, and asparagine 263. Serine 300 carries the phosphoserine modification. A glycan (N-linked (GlcNAc...) asparagine) is linked at asparagine 301. At serine 302 the chain carries Phosphoserine. Residues asparagine 318, asparagine 385, and asparagine 399 are each glycosylated (N-linked (GlcNAc...) asparagine). At serine 420 the chain carries Phosphoserine. A glycan (N-linked (GlcNAc...) asparagine) is linked at asparagine 509.

Belongs to the SLC3A transporter family. As to quaternary structure, disulfide-linked heterodimer with a non-glycosylated light chain (SLC7A5, SLC7A6, SLC7A7, SLC7A8, SLC7A10 or SLC7A11). Interacts with TLCD3A/CT120 and ICAM1. Constitutively and specifically associates with beta-1 integrins (alpha-2/beta-1, alpha-3/beta-1, alpha-5/beta-1 and alpha-6/beta-1), but minimally with alpha-4/beta-1. Interacts with LAPTM4B; recruits SLC3A2 and SLC7A5 to lysosomes to promote leucine uptake into these organelles and is required for mTORC1 activation. Post-translationally, phosphorylation on Ser-300 or Ser-302 and on Ser-420 by ecto-protein kinases favors heterotypic cell-cell interactions. N-glycosylated; N-glycosylation is crucial for trafficking and stability of SLC3A2 to the plasma membrane. In terms of tissue distribution, detected on the surface of embryonic epithelial cells in the epidermis, thymus, kidney, intestine, brain choroid plexus, and in retina. Detected in adult and embryonic brain, spleen, kidney, intestine and liver, and in adult testis (at protein level). Observed in all adult tissues tested with strongest expression in kidney, small intestine, spleen, thymus and liver. Moderate expression in brain, stomach, heart, testis, lung, skin, pancreas and skeletal muscle. In brain expressed on capillary endothelia in cerebral cortex.

It is found in the apical cell membrane. It localises to the cell membrane. The protein localises to the cell junction. The protein resides in the lysosome membrane. Its subcellular location is the melanosome. It is found in the basolateral cell membrane. Acts as a chaperone that facilitates biogenesis and trafficking of functional transporters heterodimers to the plasma membrane. Forms heterodimer with SLC7 family transporters (SLC7A5, SLC7A6, SLC7A7, SLC7A8, SLC7A10 and SLC7A11), a group of amino-acid antiporters. Heterodimers function as amino acids exchangers, the specificity of the substrate depending on the SLC7A subunit. Heterodimers SLC3A2/SLC7A6 or SLC3A2/SLC7A7 mediate the uptake of dibasic amino acids. Heterodimer SLC3A2/SLC7A11 functions as an antiporter by mediating the exchange of extracellular anionic L-cystine and intracellular L-glutamate across the cellular plasma membrane. SLC3A2/SLC7A10 translocates small neutral L- and D-amino acids across the plasma membrane. SLC3A2/SLC75 or SLC3A2/SLC7A8 translocates neutral amino acids with broad specificity, thyroid hormones and L-DOPA. SLC3A2 is essential for plasma membrane localization, stability, and the transport activity of SLC7A5 and SLC7A8. When associated with LAPTM4B, the heterodimer SLC7A5 is recruited to lysosomes to promote leucine uptake into these organelles, and thereby mediates mTORC1 activation. Modulates integrin-related signaling and is essential for integrin-dependent cell spreading, migration and tumor progression. This Mus musculus (Mouse) protein is Amino acid transporter heavy chain SLC3A2.